Consider the following 480-residue polypeptide: Aspartyl/glutamyl-tRNA(Asn/Gln) amidotransferase subunit B (480 aa).

It belongs to the GatB/GatE family. GatB subfamily. Heterotrimer of A, B and C subunits.

The enzyme catalyses L-glutamyl-tRNA(Gln) + L-glutamine + ATP + H2O = L-glutaminyl-tRNA(Gln) + L-glutamate + ADP + phosphate + H(+). It catalyses the reaction L-aspartyl-tRNA(Asn) + L-glutamine + ATP + H2O = L-asparaginyl-tRNA(Asn) + L-glutamate + ADP + phosphate + 2 H(+). Functionally, allows the formation of correctly charged Asn-tRNA(Asn) or Gln-tRNA(Gln) through the transamidation of misacylated Asp-tRNA(Asn) or Glu-tRNA(Gln) in organisms which lack either or both of asparaginyl-tRNA or glutaminyl-tRNA synthetases. The reaction takes place in the presence of glutamine and ATP through an activated phospho-Asp-tRNA(Asn) or phospho-Glu-tRNA(Gln). The protein is Aspartyl/glutamyl-tRNA(Asn/Gln) amidotransferase subunit B of Streptococcus pneumoniae (strain 70585).